The chain runs to 310 residues: ATP-dependent protease (310 aa).

The 163-residue stretch at 24 to 186 folds into the Integrase catalytic domain; the sequence is RLNQCFFKFK…TPNQKEENYF (163 aa).

This chain is ATP-dependent protease, found in Lactococcus lactis subsp. lactis (Streptococcus lactis).